A 246-amino-acid chain; its full sequence is 1-(5-phosphoribosyl)-5-[(5-phosphoribosylamino)methylideneamino] imidazole-4-carboxamide isomerase (246 aa).

Aspartate 8 serves as the catalytic Proton acceptor. Aspartate 130 acts as the Proton donor in catalysis.

This sequence belongs to the HisA/HisF family.

The protein resides in the cytoplasm. It catalyses the reaction 1-(5-phospho-beta-D-ribosyl)-5-[(5-phospho-beta-D-ribosylamino)methylideneamino]imidazole-4-carboxamide = 5-[(5-phospho-1-deoxy-D-ribulos-1-ylimino)methylamino]-1-(5-phospho-beta-D-ribosyl)imidazole-4-carboxamide. The protein operates within amino-acid biosynthesis; L-histidine biosynthesis; L-histidine from 5-phospho-alpha-D-ribose 1-diphosphate: step 4/9. The sequence is that of 1-(5-phosphoribosyl)-5-[(5-phosphoribosylamino)methylideneamino] imidazole-4-carboxamide isomerase from Shigella dysenteriae serotype 1 (strain Sd197).